The following is a 304-amino-acid chain: N-acetylglucosaminyl-phosphatidylinositol de-N-acetylase (304 aa).

Residues 1–20 are Lumenal-facing; it reads MKMLRRTKVNFSKLLYKITK. A helical membrane pass occupies residues 21–38; sequence LAIVLTILYIYFTPKIVS. Topologically, residues 39 to 304 are cytoplasmic; it reads RNNASLQHIF…FVNEFDVYTY (266 aa).

The protein belongs to the PIGL family.

It is found in the endoplasmic reticulum membrane. The enzyme catalyses a 6-(N-acetyl-alpha-D-glucosaminyl)-1-(1,2-diacyl-sn-glycero-3-phospho)-1D-myo-inositol + H2O = a 6-(alpha-D-glucosaminyl)-1-(1,2-diacyl-sn-glycero-3-phospho)-1D-myo-inositol + acetate. Its pathway is glycolipid biosynthesis; glycosylphosphatidylinositol-anchor biosynthesis. Functionally, involved in the second step of GPI biosynthesis. De-N-acetylation of N-acetylglucosaminyl-phosphatidylinositol. This Saccharomyces cerevisiae (strain ATCC 204508 / S288c) (Baker's yeast) protein is N-acetylglucosaminyl-phosphatidylinositol de-N-acetylase (GPI12).